Reading from the N-terminus, the 305-residue chain is Aspartate carbamoyltransferase catalytic subunit (305 aa).

Residues Arg-56 and Thr-57 each coordinate carbamoyl phosphate. L-aspartate is bound at residue Lys-85. Residues Arg-106, His-134, and Gln-137 each coordinate carbamoyl phosphate. L-aspartate contacts are provided by Arg-167 and Arg-227. Residues Leu-266 and Pro-267 each coordinate carbamoyl phosphate.

Belongs to the aspartate/ornithine carbamoyltransferase superfamily. ATCase family. Heterooligomer of catalytic and regulatory chains.

The enzyme catalyses carbamoyl phosphate + L-aspartate = N-carbamoyl-L-aspartate + phosphate + H(+). Its pathway is pyrimidine metabolism; UMP biosynthesis via de novo pathway; (S)-dihydroorotate from bicarbonate: step 2/3. Its function is as follows. Catalyzes the condensation of carbamoyl phosphate and aspartate to form carbamoyl aspartate and inorganic phosphate, the committed step in the de novo pyrimidine nucleotide biosynthesis pathway. The protein is Aspartate carbamoyltransferase catalytic subunit of Thermoplasma volcanium (strain ATCC 51530 / DSM 4299 / JCM 9571 / NBRC 15438 / GSS1).